A 368-amino-acid chain; its full sequence is S-adenosylmethionine:tRNA ribosyltransferase-isomerase (368 aa).

This sequence belongs to the QueA family. Monomer.

The protein resides in the cytoplasm. It carries out the reaction 7-aminomethyl-7-carbaguanosine(34) in tRNA + S-adenosyl-L-methionine = epoxyqueuosine(34) in tRNA + adenine + L-methionine + 2 H(+). The protein operates within tRNA modification; tRNA-queuosine biosynthesis. Its function is as follows. Transfers and isomerizes the ribose moiety from AdoMet to the 7-aminomethyl group of 7-deazaguanine (preQ1-tRNA) to give epoxyqueuosine (oQ-tRNA). The sequence is that of S-adenosylmethionine:tRNA ribosyltransferase-isomerase from Methylorubrum extorquens (strain CM4 / NCIMB 13688) (Methylobacterium extorquens).